The chain runs to 140 residues: Ubiquitin-like protein ATG12 (140 aa).

The tract at residues 1 to 50 is disordered; the sequence is MAEEPQSVLQLPTSIAAGGEGLTDVSPETTTPEPPSSAAVSPGTEEPAGD. A compositionally biased stretch (low complexity) spans 25 to 42; it reads VSPETTTPEPPSSAAVSP. A Glycyl lysine isopeptide (Gly-Lys) (interchain with K-130 in ATG5) cross-link involves residue Gly140.

This sequence belongs to the ATG12 family. In terms of assembly, forms a conjugate with ATG5. Part of the minor complex composed of 4 sets of ATG12-ATG5 and ATG16L1 (400 kDa); this complex interacts with ATG3 leading to disruption of ATG7 interaction and promotion of ATG8-like proteins lipidation. Forms an 800-kDa complex composed of ATG12-ATG5 and ATG16L2. Interacts with DHX58/RIG-1, IFIH1/MDA5 and MAVS/IPS-1 in monomeric form as well as in ATG12-ATG5 conjugate. The interaction with MAVS is further enhanced upon vesicular stomatitis virus (VSV) infection. Interacts with ATG3; this interaction is essential for phosphatidylethanolamine (PE)-conjugated ATG8-like proteins formation. Interacts with ATG7. Interacts with ATG10. The ATG12-ATG5 conjugate interacts with RAB33A; this interaction is bridged by ATG16L1 and promotes ATG12-ATG5-ATG16L1 complex recruitment to phagophores. Interacts with TECPR1. Interacts with SH3BGRL. The ATG12-ATG5 conjugate interacts with PDCD6IP (via the BRO1 domain); this interaction is bridged by ATG12 and promotes multiple PDCD6IP-mediated functions such as endolysosomal trafficking, macroautophagy and exosome biogenesis. In terms of processing, acetylated by EP300. As to expression, ubiquitous.

Its subcellular location is the cytoplasm. The protein resides in the preautophagosomal structure membrane. Ubiquitin-like protein involved in autophagy vesicles formation. Conjugation with ATG5 through a ubiquitin-like conjugating system involving also ATG7 as an E1-like activating enzyme and ATG10 as an E2-like conjugating enzyme, is essential for its function. The ATG12-ATG5 conjugate acts as an E3-like enzyme which is required for lipidation of ATG8 family proteins and their association to the vesicle membranes. As part of the ATG8 conjugation system with ATG5 and ATG16L1, required for recruitment of LRRK2 to stressed lysosomes and induction of LRRK2 kinase activity in response to lysosomal stress. Functionally, (Microbial infection) May act as a proviral factor. In association with ATG5, negatively regulates the innate antiviral immune response by impairing the type I IFN production pathway upon vesicular stomatitis virus (VSV) infection. Required for the translation of incoming hepatitis C virus (HCV) RNA and, thereby, for the initiation of HCV replication, but not required once infection is established. This Homo sapiens (Human) protein is Ubiquitin-like protein ATG12.